The primary structure comprises 139 residues: Putative nickel-responsive regulator (139 aa).

Ni(2+) contacts are provided by H79, H90, H92, and C98.

This sequence belongs to the transcriptional regulatory CopG/NikR family. Requires Ni(2+) as cofactor.

In terms of biological role, transcriptional regulator. The protein is Putative nickel-responsive regulator of Solibacter usitatus (strain Ellin6076).